Here is a 440-residue protein sequence, read N- to C-terminus: KH domain-containing protein 3 (440 aa).

The interval Met1 to Glu39 is involved in RNA binding. The 79-residue stretch at Asp40 to Ala118 folds into the KH; atypical domain. The tract at residues Lys132–Ala201 is disordered. Phosphoserine; by ATR is present on Ser151. Thr274 and Thr286 each carry phosphothreonine. The interval Val341–Leu440 is required for interaction with NUMA1 and regulation of apoptosis in response to DNA damage. Phosphoserine is present on Ser349.

It belongs to the KHDC1 family. As to quaternary structure, component of the subcortical maternal complex (SCMC), at least composed of NLRP5, KHDC3, OOEP, and TLE6. Within the complex, interacts with NLRP5, OOEP and TLE6. The SCMC may facilitate translocation of its components between the nuclear and cytoplasmic compartments. Forms a scaffold complex with OOEP/FLOPED, and interacts with BLM and TRIM25 at DNA replication forks. Interacts with PARP1; the interaction is increased following the formation of DNA double-strand breaks. Interacts (via C-terminus) with NUMA1. Phosphorylation at Ser-151 is required to promote stalled fork restart. Detected in ovary, but not in testis or somatic tissues. In the ovary, expressed in growing oocytes.

Its subcellular location is the cytoplasm. The protein resides in the cell cortex. The protein localises to the nucleus. It is found in the mitochondrion. It localises to the cytoskeleton. Its subcellular location is the microtubule organizing center. The protein resides in the centrosome. The protein localises to the chromosome. In terms of biological role, component of the subcortical maternal complex (SCMC), a multiprotein complex that plays a key role in early embryonic development. The SCMC complex is a structural constituent of cytoplasmic lattices, which consist in fibrous structures found in the cytoplasm of oocytes and preimplantation embryos. They are required to store maternal proteins critical for embryonic development, such as proteins that control epigenetic reprogramming of the preimplantation embryo, and prevent their degradation or activation. KHDC3 ensures proper spindle assembly by regulating the localization of AURKA via RHOA signaling and of PLK1 via a RHOA-independent process. Required for the localization of MAD2L1 to kinetochores to enable spindle assembly checkpoint function. As part of the OOEP-KHDC3 scaffold, recruits BLM and TRIM25 to DNA replication forks, thereby promoting the ubiquitination of BLM by TRIM25, enhancing BLM retainment at replication forks and therefore promoting stalled replication fork restart. Regulates homologous recombination-mediated DNA repair via recruitment of RAD51 to sites of DNA double-strand breaks, and sustainment of PARP1 activity, which in turn modulates downstream ATM or ATR activation. Activation of ATM or ATR in response to DNA double-strand breaks may be cell-type specific. Its role in DNA double-strand break repair is independent of its role in restarting stalled replication forks. Promotes neural stem cell neurogenesis and neuronal differentiation in the hippocampus. May regulate normal development of learning, memory and anxiety. Capable of binding RNA. In Mus musculus (Mouse), this protein is KH domain-containing protein 3.